The chain runs to 379 residues: Chaperone protein DnaJ (379 aa).

Residues 5–70 enclose the J domain; it reads DYYETLEVSQ…QKRAAYDQYG (66 aa). The segment at 135-213 adopts a CR-type zinc-finger fold; it reads GKSLEIKVPT…CRGQGRVEKT (79 aa). Residues C148, C151, C165, C168, C187, C190, C201, and C204 each coordinate Zn(2+). CXXCXGXG motif repeat units lie at residues 148-155, 165-172, 187-194, and 201-208; these read CEPCDGSG, CSTCHGHG, CPTCSGKG, and CTSCRGQG.

This sequence belongs to the DnaJ family. As to quaternary structure, homodimer. It depends on Zn(2+) as a cofactor.

The protein resides in the cytoplasm. In terms of biological role, participates actively in the response to hyperosmotic and heat shock by preventing the aggregation of stress-denatured proteins and by disaggregating proteins, also in an autonomous, DnaK-independent fashion. Unfolded proteins bind initially to DnaJ; upon interaction with the DnaJ-bound protein, DnaK hydrolyzes its bound ATP, resulting in the formation of a stable complex. GrpE releases ADP from DnaK; ATP binding to DnaK triggers the release of the substrate protein, thus completing the reaction cycle. Several rounds of ATP-dependent interactions between DnaJ, DnaK and GrpE are required for fully efficient folding. Also involved, together with DnaK and GrpE, in the DNA replication of plasmids through activation of initiation proteins. This Colwellia maris protein is Chaperone protein DnaJ.